The following is a 46-amino-acid chain: Major cold-shock protein (46 aa).

One can recognise a CSD domain in the interval 1 to 46 (EKGFGFISPADGSKDVFVHFSAIQSTSFKTLDEGQRVEFTIEQGQK).

Homodimer.

Its subcellular location is the cytoplasm. This is Major cold-shock protein (cspA) from Aeromonas salmonicida.